A 201-amino-acid polypeptide reads, in one-letter code: Recombination protein RecR (201 aa).

A C4-type zinc finger spans residues 57–72 (CSDCRTFTEQDVCAIC). Positions 81–176 (GQICVVESPA…MASRIAHGVP (96 aa)) constitute a Toprim domain.

The protein belongs to the RecR family.

In terms of biological role, may play a role in DNA repair. It seems to be involved in an RecBC-independent recombinational process of DNA repair. It may act with RecF and RecO. The protein is Recombination protein RecR of Pectobacterium carotovorum subsp. carotovorum (strain PC1).